The sequence spans 204 residues: uncharacterized protein (204 aa).

2 disordered regions span residues 1–37 (MRAL…GSVS) and 159–204 (GYRP…DGEL). Low complexity predominate over residues 28-37 (GRGPRAGSVS). The WGR domain occupies 88–175 (PYRLYVERLD…LPKEKWPAEA (88 aa)). Basic and acidic residues-rich tracts occupy residues 166-179 (LPKE…EHES) and 188-204 (PEGH…DGEL).

This is an uncharacterized protein from Sinorhizobium fredii (strain NBRC 101917 / NGR234).